The following is a 529-amino-acid chain: MGEVERTRQSSSSLLTFKRKRALEACDSCRKQKTRCLAGSVEDENRACLRCRSLNMDCSLADPNHFIRKVENDNMDAISANINSKLENRLKVLEKAISSITNSPIAGQISLKSEKDVFLQGLLSMDEIELLLEIFIERYGKRWLSVDYSASQYMELLYTKSHLMLATACLIALRHNPSLKARIYTDVLNIVDRLISEELLTTSPSLQFFEAVSMLTLYRPLRLSQKQDLWLLSGFALQHRTLSSTKGWFNGFAGSSATLTYLDIVPARTWNHLCHGHLVMCMGYRRHAMLDENTFDDCRNILTNTKANEFDGNILGMLSVYSMLYRMLRSPTLDLDYAIFQLEEWRKEWCHLWEQPEPQYSRIAYFYSYNVVYEASIQTATDGNDFANIPRYVSMVQSYALKTIDAIFELSAYDMSRCSDHVLFHAGFASASLLRLIYAAKTKEVDTSIVQPKVLNDLVTKIWKWLLVISVDQYHLATKFANYLKEYQKTVNEGTAESTWFKGPLRPVSSTTLQALKPYNLGVATVERG.

A DNA-binding region (zn(2)-C6 fungal-type) is located at residues 26 to 58 (CDSCRKQKTRCLAGSVEDENRACLRCRSLNMDC).

It localises to the nucleus. This is an uncharacterized protein from Schizosaccharomyces pombe (strain 972 / ATCC 24843) (Fission yeast).